We begin with the raw amino-acid sequence, 86 residues long: Large ribosomal subunit protein eL43 (86 aa).

Positions 40, 43, 58, and 61 each coordinate Zn(2+). The C4-type zinc-finger motif lies at 40–61 (CPFCRSKAVIREAYGIYRCKKC).

It belongs to the eukaryotic ribosomal protein eL43 family. Putative zinc-binding subfamily. In terms of assembly, part of the 50S ribosomal subunit. Requires Zn(2+) as cofactor.

Its function is as follows. Binds to the 23S rRNA. This is Large ribosomal subunit protein eL43 from Nanoarchaeum equitans (strain Kin4-M).